A 110-amino-acid polypeptide reads, in one-letter code: DNA-directed RNA polymerase subunit omega (110 aa).

This sequence belongs to the RNA polymerase subunit omega family. As to quaternary structure, the RNAP catalytic core consists of 2 alpha, 1 beta, 1 beta' and 1 omega subunit. When a sigma factor is associated with the core the holoenzyme is formed, which can initiate transcription.

It carries out the reaction RNA(n) + a ribonucleoside 5'-triphosphate = RNA(n+1) + diphosphate. Promotes RNA polymerase assembly. Latches the N- and C-terminal regions of the beta' subunit thereby facilitating its interaction with the beta and alpha subunits. The polypeptide is DNA-directed RNA polymerase subunit omega (rpoZ) (Mycobacterium bovis (strain ATCC BAA-935 / AF2122/97)).